A 234-amino-acid polypeptide reads, in one-letter code: Small ribosomal subunit protein uS3 (234 aa).

Positions 39–107 constitute a KH type-2 domain; the sequence is VRDYLKKKLS…PVHVNIEEVR (69 aa). A disordered region spans residues 212-234; that stretch reads EQPAAAEQEKRGKKSGVKHAAAS.

The protein belongs to the universal ribosomal protein uS3 family. In terms of assembly, part of the 30S ribosomal subunit. Forms a tight complex with proteins S10 and S14.

Functionally, binds the lower part of the 30S subunit head. Binds mRNA in the 70S ribosome, positioning it for translation. The polypeptide is Small ribosomal subunit protein uS3 (Thiobacillus denitrificans (strain ATCC 25259 / T1)).